The primary structure comprises 395 residues: E3 ubiquitin-protein ligase RDUF1 (395 aa).

2 disordered regions span residues 1–22 (MMPN…TTTT) and 107–130 (PVIV…EGDG). Residues 9–22 (TITPTTESTTTTTT) show a composition bias toward low complexity. A compositionally biased stretch (basic and acidic residues) spans 121–130 (ERVENEEGDG). The RING-type; atypical zinc finger occupies 215-256 (CAVCTEVFEAGIEGREMPCKHIFHGDCIVPWLSIRNSCPVCR).

In terms of tissue distribution, expressed in root tips, leaf tips, junction of carpels and pedicels, stigma, anthers, pollen, vasculature of sepals and petals, immature seeds and embryos.

The protein localises to the cytoplasm. The protein resides in the cytosol. It localises to the nucleus. It catalyses the reaction S-ubiquitinyl-[E2 ubiquitin-conjugating enzyme]-L-cysteine + [acceptor protein]-L-lysine = [E2 ubiquitin-conjugating enzyme]-L-cysteine + N(6)-ubiquitinyl-[acceptor protein]-L-lysine.. It functions in the pathway protein modification; protein ubiquitination. E3 ubiquitin-protein ligase involved in the positive regulation of abscisic acid-dependent drought stress responses. Involved in the positive regulation of responses to salt and osmotic stresses during seed germination and early seedling development. Possesses E3 ubiquitin ligase activity in vitro. This is E3 ubiquitin-protein ligase RDUF1 from Arabidopsis thaliana (Mouse-ear cress).